A 530-amino-acid chain; its full sequence is Structure-specific endonuclease subunit SLX1 homolog 2 (530 aa).

The GIY-YIG domain occupies 4–89 (RFHCVYLLTS…PTKSTRLKTQ (86 aa)). Residues 232–365 (CALCSLPLRS…PSQPCPCPLC (134 aa)) form an SLX1-type zinc finger. Disordered regions lie at residues 276 to 306 (ATMG…MDAH), 410 to 438 (NSSL…YCGD), and 474 to 502 (LPPS…RMTD). The segment covering 283-298 (RNERSGEYSNKIKDDS) has biased composition (basic and acidic residues).

This sequence belongs to the SLX1 family. Forms a heterodimer with a member of the SLX4 family. Requires a divalent metal cation as cofactor.

The protein resides in the nucleus. Functionally, catalytic subunit of a heterodimeric structure-specific endonuclease that resolves DNA secondary structures generated during DNA repair and recombination. Has endonuclease activity towards branched DNA substrates, introducing single-strand cuts in duplex DNA close to junctions with ss-DNA. This chain is Structure-specific endonuclease subunit SLX1 homolog 2, found in Trypanosoma cruzi (strain CL Brener).